A 519-amino-acid polypeptide reads, in one-letter code: T-box transcription factor TBX5 (519 aa).

Residues 1–43 form a disordered region; it reads MADTEEAYGMPDTPVEAEPKELQCEPKQDNQMGASSKTPTSPQ. Positions 17-28 are enriched in basic and acidic residues; it reads AEPKELQCEPKQ. Positions 29–43 are enriched in polar residues; the sequence is DNQMGASSKTPTSPQ. A DNA-binding region (T-box) is located at residues 63–238; sequence LWLKFHEVGT…NNPFAKGFRG (176 aa). Disordered stretches follow at residues 254–312 and 335–376; these read EYPV…SAYP and ELSY…TESA. Positions 262 to 303 are enriched in polar residues; that stretch reads TVRQKVSSNHSPFSQETRNITGSSTLNSQYQCENGVSSTSQD.

In terms of assembly, monomer. Homodimer (via the T-box); binds DNA as homodimer.

The protein localises to the nucleus. The protein resides in the cytoplasm. Its function is as follows. DNA-binding protein that regulates the transcription of several genes and is involved in heart development and limb pattern formation. May bind to the core DNA motif of promoters. The protein is T-box transcription factor TBX5 (tbx5) of Xenopus tropicalis (Western clawed frog).